The sequence spans 209 residues: Ribosomal RNA large subunit methyltransferase E (209 aa).

Residues Gly-63, Trp-65, Asp-83, Asp-99, and Asp-124 each coordinate S-adenosyl-L-methionine. Lys-164 serves as the catalytic Proton acceptor.

It belongs to the class I-like SAM-binding methyltransferase superfamily. RNA methyltransferase RlmE family.

Its subcellular location is the cytoplasm. The catalysed reaction is uridine(2552) in 23S rRNA + S-adenosyl-L-methionine = 2'-O-methyluridine(2552) in 23S rRNA + S-adenosyl-L-homocysteine + H(+). Specifically methylates the uridine in position 2552 of 23S rRNA at the 2'-O position of the ribose in the fully assembled 50S ribosomal subunit. In Shewanella frigidimarina (strain NCIMB 400), this protein is Ribosomal RNA large subunit methyltransferase E.